The following is a 268-amino-acid chain: Undecaprenyl-diphosphatase 1 (268 aa).

7 consecutive transmembrane segments (helical) span residues Thr-5–Ser-25, Gly-43–Phe-63, His-81–His-101, Val-107–Leu-127, Ala-185–Phe-205, Ala-214–Val-234, and Leu-248–Gly-268.

Belongs to the UppP family.

It localises to the cell inner membrane. The catalysed reaction is di-trans,octa-cis-undecaprenyl diphosphate + H2O = di-trans,octa-cis-undecaprenyl phosphate + phosphate + H(+). In terms of biological role, catalyzes the dephosphorylation of undecaprenyl diphosphate (UPP). Confers resistance to bacitracin. In Mesorhizobium japonicum (strain LMG 29417 / CECT 9101 / MAFF 303099) (Mesorhizobium loti (strain MAFF 303099)), this protein is Undecaprenyl-diphosphatase 1.